The chain runs to 455 residues: GTPase Der (455 aa).

EngA-type G domains follow at residues 4–169 (PVVA…PPKD) and 178–353 (IQMA…EQHR). GTP contacts are provided by residues 10–17 (GRPNVGKS), 57–61 (DTGGL), 120–123 (NKCE), 184–191 (GRPNVGKS), 231–235 (DTAGI), and 296–299 (NKWD). A KH-like domain is found at 354-439 (RRVSTSVVNE…PLRLFWRGKQ (86 aa)).

The protein belongs to the TRAFAC class TrmE-Era-EngA-EngB-Septin-like GTPase superfamily. EngA (Der) GTPase family. In terms of assembly, associates with the 50S ribosomal subunit.

Its function is as follows. GTPase that plays an essential role in the late steps of ribosome biogenesis. This Synechococcus sp. (strain CC9605) protein is GTPase Der.